The following is a 189-amino-acid chain: MKFSTVGFLFSTILFKSAFAGWMDTHMKDEHHIDKYTDESFFRLHDLGKKGYWSDQDILSLYGLFENDEVPFVKKNEVLVDVLKKCDPSGNRRITLDEFLAFRKNGGELTDFGFPGHHGDEEEEFEMHHVEKYHPAGLDEPDENWNHPEDIEHFQKHDEIFHGDKKPEERRKHFVKYNNIPDKYRRVSI.

The N-terminal stretch at 1-20 (MKFSTVGFLFSTILFKSAFA) is a signal peptide. Residues 74–109 (KKNEVLVDVLKKCDPSGNRRITLDEFLAFRKNGGEL) enclose the EF-hand domain. 5 residues coordinate Ca(2+): Asp-87, Ser-89, Asn-91, Arg-93, and Glu-98.

The protein resides in the endoplasmic reticulum lumen. It is found in the golgi apparatus lumen. This is an uncharacterized protein from Schizosaccharomyces pombe (strain 972 / ATCC 24843) (Fission yeast).